Consider the following 346-residue polypeptide: Phosphate acyltransferase (346 aa).

The protein belongs to the PlsX family. Homodimer. Probably interacts with PlsY.

The protein localises to the cytoplasm. The catalysed reaction is a fatty acyl-[ACP] + phosphate = an acyl phosphate + holo-[ACP]. It participates in lipid metabolism; phospholipid metabolism. Its function is as follows. Catalyzes the reversible formation of acyl-phosphate (acyl-PO(4)) from acyl-[acyl-carrier-protein] (acyl-ACP). This enzyme utilizes acyl-ACP as fatty acyl donor, but not acyl-CoA. The protein is Phosphate acyltransferase of Brucella abortus (strain S19).